Consider the following 899-residue polypeptide: Solute carrier family 12 member 9 (899 aa).

Residues 1 to 44 lie on the Cytoplasmic side of the membrane; that stretch reads MTSESSPLLHYRLFSVSDGGLGPPDSSPIMTDAVTVGTGPTQRK. Residues 45–65 form a helical membrane-spanning segment; it reads LSTFFGVVVPTVLSMFSIVVF. At 66–80 the chain is on the extracellular side; it reads MRIGFVVGHAGLLQS. The helical transmembrane segment at 81–101 threads the bilayer; that stretch reads LLMLFVAYVIIWLTVLSVCAI. Topologically, residues 102–127 are cytoplasmic; the sequence is STNGAVQGGGAYFMISRTLGPEFGGS. Residues 128–148 traverse the membrane as a helical segment; that stretch reads IGLMFYLANVFACGVYVLGLV. Residues 149-176 lie on the Extracellular side of the membrane; sequence EAVLDVFGRDPSDVTDSLRSLPQGYGYS. Residues 177–197 form a helical membrane-spanning segment; that stretch reads FLYASIILLLCMAICLVGASI. At 198 to 202 the chain is on the cytoplasmic side; it reads YSQAS. The chain crosses the membrane as a helical span at residues 203–223; the sequence is FFIFLLVFVVLLTILISFLAV. Residues 224-266 lie on the Extracellular side of the membrane; sequence RPLTVSIRHGGNVTMTGVYTGINSSTLHNNLQADYSLDYTTGN. N-linked (GlcNAc...) asparagine glycosylation is found at Asn-235 and Asn-246. Residues 267–287 traverse the membrane as a helical segment; that stretch reads LMNFATVFAVMFNGCTGIMAG. Over 288-304 the chain is Cytoplasmic; that stretch reads CNLSGELKQPSRSIPMG. The chain crosses the membrane as a helical span at residues 305–325; sequence TIIAVIITFFVYLILFIFTAF. Residues 326 to 347 lie on the Extracellular side of the membrane; the sequence is TCDRTLLREDYGFFRSINIWPP. A helical transmembrane segment spans residues 348-368; it reads FVLIGVYATSLSASMSTLIGA. Residues 369–393 are Cytoplasmic-facing; the sequence is SRILHALAKDDLFGVLLAPAKLVSK. The helical transmembrane segment at 394–414 threads the bilayer; that stretch reads GGNPWGAVVYTWALVQLVLLA. Residues 415 to 419 are Extracellular-facing; the sequence is GKLNT. A helical transmembrane segment spans residues 420–440; that stretch reads IAGIVTVFYLIAYAAIDLACL. Residues 441 to 469 lie on the Cytoplasmic side of the membrane; it reads ALEWASAPNFRPTFRFFSWHTCLLGILSS. Residues 470–490 traverse the membrane as a helical segment; it reads LVMMFLINPAYASGSIVLLLL. The Extracellular portion of the chain corresponds to 491–739; that stretch reads LLGSIHFRSS…PLDLLRPQAS (249 aa). A helical transmembrane segment spans residues 740–760; that stretch reads AYVDVCSLFLLQMACILNMAA. At 761–899 the chain is on the cytoplasmic side; that stretch reads SWRRYQLRVF…GLTPVTCTEL (139 aa).

It belongs to the SLC12A transporter family.

It is found in the cell membrane. The protein localises to the lysosome membrane. Functionally, seems to correspond to a subunit of a multimeric transport system and thus, additional subunits may be required for its function. May play a role in lysosomal ion flux and osmoregulation. The polypeptide is Solute carrier family 12 member 9 (slc12a9) (Xenopus laevis (African clawed frog)).